A 550-amino-acid chain; its full sequence is CTP synthase (550 aa).

The interval 1–267 is amidoligase domain; sequence MKTKFIFITG…DQKIAIMLRL (267 aa). S14 lines the CTP pocket. S14 provides a ligand contact to UTP. ATP contacts are provided by residues 15-20 and D72; that span reads SLGKGL. D72 and E141 together coordinate Mg(2+). Residues 148 to 150, 188 to 193, and K224 each bind CTP; these read DIE and KTKPTQ. UTP contacts are provided by residues 188–193 and K224; that span reads KTKPTQ. The 254-residue stretch at 292-545 folds into the Glutamine amidotransferase type-1 domain; that stretch reads TIGIVGKYVD…IKAAKKEAMG (254 aa). G354 lines the L-glutamine pocket. C381 acts as the Nucleophile; for glutamine hydrolysis in catalysis. L-glutamine-binding positions include 382–385, E405, and R473; that span reads LGMQ. Active-site residues include H518 and E520.

This sequence belongs to the CTP synthase family. Homotetramer.

The catalysed reaction is UTP + L-glutamine + ATP + H2O = CTP + L-glutamate + ADP + phosphate + 2 H(+). The enzyme catalyses L-glutamine + H2O = L-glutamate + NH4(+). It catalyses the reaction UTP + NH4(+) + ATP = CTP + ADP + phosphate + 2 H(+). It participates in pyrimidine metabolism; CTP biosynthesis via de novo pathway; CTP from UDP: step 2/2. Its activity is regulated as follows. Allosterically activated by GTP, when glutamine is the substrate; GTP has no effect on the reaction when ammonia is the substrate. The allosteric effector GTP functions by stabilizing the protein conformation that binds the tetrahedral intermediate(s) formed during glutamine hydrolysis. Inhibited by the product CTP, via allosteric rather than competitive inhibition. In terms of biological role, catalyzes the ATP-dependent amination of UTP to CTP with either L-glutamine or ammonia as the source of nitrogen. Regulates intracellular CTP levels through interactions with the four ribonucleotide triphosphates. The polypeptide is CTP synthase (Nitratidesulfovibrio vulgaris (strain DSM 19637 / Miyazaki F) (Desulfovibrio vulgaris)).